The chain runs to 701 residues: Elongation factor G (701 aa).

The 279-residue stretch at 8–286 (DRVRNIGIIA…AVVLLLPSPL (279 aa)) folds into the tr-type G domain. GTP-binding positions include 17 to 24 (AHIDAGKT), 85 to 89 (DTPGH), and 139 to 142 (NKMD).

It belongs to the TRAFAC class translation factor GTPase superfamily. Classic translation factor GTPase family. EF-G/EF-2 subfamily.

It localises to the cytoplasm. In terms of biological role, catalyzes the GTP-dependent ribosomal translocation step during translation elongation. During this step, the ribosome changes from the pre-translocational (PRE) to the post-translocational (POST) state as the newly formed A-site-bound peptidyl-tRNA and P-site-bound deacylated tRNA move to the P and E sites, respectively. Catalyzes the coordinated movement of the two tRNA molecules, the mRNA and conformational changes in the ribosome. The protein is Elongation factor G of Herpetosiphon aurantiacus (strain ATCC 23779 / DSM 785 / 114-95).